The sequence spans 624 residues: Chaperone protein HtpG (624 aa).

Residues 1–336 (MKGQETRGFQ…SNDLPLNVSR (336 aa)) are a; substrate-binding. Residues 337–552 (EILQDSTVTR…ADEMSTQMAK (216 aa)) form a b region. Residues 553 to 624 (LFAAAGQSVP…IRRMNQLLVS (72 aa)) are c.

Belongs to the heat shock protein 90 family. In terms of assembly, homodimer.

It is found in the cytoplasm. In terms of biological role, molecular chaperone. Has ATPase activity. The polypeptide is Chaperone protein HtpG (Salmonella paratyphi B (strain ATCC BAA-1250 / SPB7)).